A 432-amino-acid polypeptide reads, in one-letter code: Ciliated left-right organizer protein containing ZP-N domains homolog (432 aa).

As to expression, expressed specifically by cells of the ciliated left-right organizer.

This is Ciliated left-right organizer protein containing ZP-N domains homolog (ciroz) from Danio rerio (Zebrafish).